The sequence spans 983 residues: Type IV secretion system protein CagE (983 aa).

Residue 597–604 (GSTGSGKT) coordinates ATP.

It belongs to the TrbE/VirB4 family. Component of the Cag type IV secretion system, which is composed of a wheel-shaped outer membrane complex (OMC) and an inner membrane complex (IMC). Interacts with CagV and CagBeta.

Its subcellular location is the cell inner membrane. It carries out the reaction ATP + H2O + cellular proteinSide 1 = ADP + phosphate + cellular proteinSide 2.. Functionally, ATPase component of the type IV secretion system Cag (Cag-T4SS). Acts as a molecular motor to provide the energy that is required for the export of proteins. Required for CagA translocation and induction of IL-8 in host gastric epithelial cells. Plays a key role in Cag-T4SS pilus biogenesis, especially in the localization and stabilization of the pilus-associated components CagI, CagL and the surface protein CagH. Is also critical for assembly of the entire cytoplasmic portion of the Cag inner membrane complex (IMC). The polypeptide is Type IV secretion system protein CagE (Helicobacter pylori (strain ATCC 700392 / 26695) (Campylobacter pylori)).